A 517-amino-acid polypeptide reads, in one-letter code: ATP synthase subunit alpha 1 (517 aa).

174 to 181 is an ATP binding site; the sequence is GDRQTGKT.

Belongs to the ATPase alpha/beta chains family. F-type ATPases have 2 components, CF(1) - the catalytic core - and CF(0) - the membrane proton channel. CF(1) has five subunits: alpha(3), beta(3), gamma(1), delta(1), epsilon(1). CF(0) has three main subunits: a(1), b(2) and c(9-12). The alpha and beta chains form an alternating ring which encloses part of the gamma chain. CF(1) is attached to CF(0) by a central stalk formed by the gamma and epsilon chains, while a peripheral stalk is formed by the delta and b chains.

It is found in the cell inner membrane. It catalyses the reaction ATP + H2O + 4 H(+)(in) = ADP + phosphate + 5 H(+)(out). Its function is as follows. Produces ATP from ADP in the presence of a proton gradient across the membrane. The alpha chain is a regulatory subunit. The protein is ATP synthase subunit alpha 1 of Polaromonas naphthalenivorans (strain CJ2).